The chain runs to 611 residues: Probable Xaa-Pro aminopeptidase P (611 aa).

D408, D419, E517, and E531 together coordinate Mn(2+).

The protein belongs to the peptidase M24B family. Mn(2+) serves as cofactor.

It catalyses the reaction Release of any N-terminal amino acid, including proline, that is linked to proline, even from a dipeptide or tripeptide.. Catalyzes the removal of a penultimate prolyl residue from the N-termini of peptides. This is Probable Xaa-Pro aminopeptidase P (AMPP) from Coccidioides posadasii (strain RMSCC 757 / Silveira) (Valley fever fungus).